We begin with the raw amino-acid sequence, 462 residues long: Argininosuccinate lyase (462 aa).

This sequence belongs to the lyase 1 family. Argininosuccinate lyase subfamily.

The protein resides in the cytoplasm. It catalyses the reaction 2-(N(omega)-L-arginino)succinate = fumarate + L-arginine. It functions in the pathway amino-acid biosynthesis; L-arginine biosynthesis; L-arginine from L-ornithine and carbamoyl phosphate: step 3/3. The protein is Argininosuccinate lyase of Dechloromonas aromatica (strain RCB).